Here is a 353-residue protein sequence, read N- to C-terminus: Melanin-concentrating hormone receptor 1 (353 aa).

A disordered region spans residues Met1 to Pro31. Residues Met1–Ser45 are Extracellular-facing. Polar residues predominate over residues Gly11 to Pro31. Asn13, Asn16, and Asn23 each carry an N-linked (GlcNAc...) asparagine glycan. The chain crosses the membrane as a helical span at residues Val46–Val66. Residues Lys67 to Asp79 are Cytoplasmic-facing. Residues Ile80–Ile100 form a helical membrane-spanning segment. The Extracellular portion of the chain corresponds to His101 to Leu118. Cys116 and Cys194 form a disulfide bridge. A helical membrane pass occupies residues Ile119–Ile139. Residues Asp140–Thr161 are Cytoplasmic-facing. The chain crosses the membrane as a helical span at residues Leu162–Ala182. Residues Arg183–Asp204 are Extracellular-facing. Residues Leu205 to Thr225 traverse the membrane as a helical segment. The Cytoplasmic portion of the chain corresponds to Ala226–Thr257. A helical membrane pass occupies residues Ala258–Thr278. Topologically, residues Gln279 to Asn294 are extracellular. A helical transmembrane segment spans residues Ala295–Cys315. Residues Glu316–Thr353 lie on the Cytoplasmic side of the membrane.

Belongs to the G-protein coupled receptor 1 family. Interacts with NCDN.

It is found in the cell membrane. In terms of biological role, receptor for melanin-concentrating hormone, coupled to both G proteins that inhibit adenylyl cyclase and G proteins that activate phosphoinositide hydrolysis. The chain is Melanin-concentrating hormone receptor 1 from Macaca mulatta (Rhesus macaque).